A 34-amino-acid polypeptide reads, in one-letter code: Mytilin-B (34 aa).

4 cysteine pairs are disulfide-bonded: Cys-2–Cys-27, Cys-6–Cys-29, Cys-10–Cys-31, and Cys-15–Cys-34.

Its subcellular location is the secreted. Its function is as follows. Has antibacterial and antiviral activity. This is Mytilin-B from Mytilus edulis (Blue mussel).